The chain runs to 32 residues: Calcitonin (32 aa).

Cysteines 1 and 7 form a disulfide. A Proline amide modification is found at P32.

Belongs to the calcitonin family.

The protein localises to the secreted. Functionally, calcitonin is a peptide hormone that causes a rapid but short-lived drop in the level of calcium and phosphate in blood by promoting the incorporation of those ions in the bones. Calcitonin function is mediated by the calcitonin receptor/CALCR and the CALCR-RAMP2 (AMYR2) receptor complex. This chain is Calcitonin (CALCA), found in Sus scrofa (Pig).